A 119-amino-acid chain; its full sequence is uncharacterized protein (119 aa).

The chain crosses the membrane as a helical span at residues 74 to 91 (LSVHFLLNVISAILSMLI).

The protein localises to the membrane. This is an uncharacterized protein from Schizosaccharomyces pombe (strain 972 / ATCC 24843) (Fission yeast).